A 128-amino-acid polypeptide reads, in one-letter code: Large-conductance mechanosensitive channel (128 aa).

The next 2 helical transmembrane spans lie at 11–31 and 70–90; these read FALK…AAFG and GAFI…FIFV.

This sequence belongs to the MscL family. Homopentamer.

The protein localises to the cell membrane. Channel that opens in response to stretch forces in the membrane lipid bilayer. May participate in the regulation of osmotic pressure changes within the cell. In Listeria monocytogenes serotype 4a (strain HCC23), this protein is Large-conductance mechanosensitive channel.